A 589-amino-acid polypeptide reads, in one-letter code: ATP-dependent lipid A-core flippase (589 aa).

5 helical membrane-spanning segments follow: residues 29–49 (LLLV…TGFL), 70–90 (WLPV…YITD), 157–177 (VIGA…TILV), 261–281 (MIGA…ALAG), and 283–303 (LTAG…PGLK). Residues 32-314 (VAALIAALIE…LTNVQNMVQR (283 aa)) form the ABC transmembrane type-1 domain. The ABC transporter domain maps to 346–582 (IEFRDVTARY…GGLYSHLHGM (237 aa)). 380-387 (GRSGSGKS) contacts ATP.

The protein belongs to the ABC transporter superfamily. Lipid exporter (TC 3.A.1.106) family. In terms of assembly, homodimer.

It is found in the cell inner membrane. It carries out the reaction ATP + H2O + lipid A-core oligosaccharideSide 1 = ADP + phosphate + lipid A-core oligosaccharideSide 2.. Involved in lipopolysaccharide (LPS) biosynthesis. Translocates lipid A-core from the inner to the outer leaflet of the inner membrane. Transmembrane domains (TMD) form a pore in the inner membrane and the ATP-binding domain (NBD) is responsible for energy generation. The polypeptide is ATP-dependent lipid A-core flippase (Xanthomonas euvesicatoria pv. vesicatoria (strain 85-10) (Xanthomonas campestris pv. vesicatoria)).